Here is a 405-residue protein sequence, read N- to C-terminus: Proline-rich P65 protein (405 aa).

The interval 1-58 (MDINKPGWNQSDQQATAYDPNQQQYYGDGSTYYDPDQAVDPNQAYYPDPNTYPDAAAY) is disordered. Over residues 7–25 (GWNQSDQQATAYDPNQQQY) the composition is skewed to polar residues. Repeat copies occupy residues 40–45 (DPNQAY), 75–80 (DPNQAY), 83–87 (DPNAY), 89–93 (DPNAY), 95–99 (DPNAY), 101–105 (DPNAY), 107–111 (DPNAY), 119–123 (DPNAY), 140–145 (DPNQAY), 148–152 (DPNAY), 154–158 (DPNAY), and 168–172 (DPNAY). Residues 40–172 (DPNQAYYPDP…YVTSTDPNAY (133 aa)) are 12 X 5 AA repeats of D-P-N-Q-A-Y.

In terms of processing, the N-terminus is blocked.

The protein localises to the cell membrane. This Mycoplasma pneumoniae (strain ATCC 29342 / M129 / Subtype 1) (Mycoplasmoides pneumoniae) protein is Proline-rich P65 protein (p65).